The sequence spans 171 residues: NADH-quinone oxidoreductase subunit I (171 aa).

4Fe-4S ferredoxin-type domains follow at residues 41 to 71 (LTRD…VVKT) and 81 to 110 (ESFT…LTPD). [4Fe-4S] cluster is bound by residues cysteine 51, cysteine 54, cysteine 57, cysteine 61, cysteine 90, cysteine 93, cysteine 96, and cysteine 100.

Belongs to the complex I 23 kDa subunit family. In terms of assembly, NDH-1 is composed of 13 different subunits. Subunits NuoA, H, J, K, L, M, N constitute the membrane sector of the complex. [4Fe-4S] cluster serves as cofactor.

It localises to the cell inner membrane. It catalyses the reaction a quinone + NADH + 5 H(+)(in) = a quinol + NAD(+) + 4 H(+)(out). Its function is as follows. NDH-1 shuttles electrons from NADH, via FMN and iron-sulfur (Fe-S) centers, to quinones in the respiratory chain. The immediate electron acceptor for the enzyme in this species is believed to be ubiquinone. Couples the redox reaction to proton translocation (for every two electrons transferred, four hydrogen ions are translocated across the cytoplasmic membrane), and thus conserves the redox energy in a proton gradient. The sequence is that of NADH-quinone oxidoreductase subunit I from Shewanella woodyi (strain ATCC 51908 / MS32).